We begin with the raw amino-acid sequence, 523 residues long: Tyrosine-protein kinase transforming protein Src (523 aa).

The interval 1–50 (MGSSKSKPKDPSQRRRSLEPPDSTHHGGFPASQTPNKTAAPDTHRTPSRS) is disordered. Gly2 is lipidated: N-myristoyl glycine; by host. Basic and acidic residues predominate over residues 7–25 (KPKDPSQRRRSLEPPDSTH). Positions 71 to 139 (TSPQRAGALA…PSNYVAPSDS (69 aa)) constitute an SH3 domain. The SH2 domain maps to 145–242 (WYFGKITRRE…GLCHRLTNVC (98 aa)). In terms of domain architecture, Protein kinase spans 264–514 (LRLEVKLGQG…TFEYLQAQLL (251 aa)). Residues 270 to 278 (LGQGYFGEV) and Lys292 each bind ATP. Asp383 acts as the Proton acceptor in catalysis. At Tyr413 the chain carries Phosphotyrosine; by autocatalysis.

Belongs to the protein kinase superfamily. Tyr protein kinase family. SRC subfamily. Homodimer. The phosphorylated form is termed pp60v-src.

It carries out the reaction L-tyrosyl-[protein] + ATP = O-phospho-L-tyrosyl-[protein] + ADP + H(+). In terms of biological role, this phosphoprotein, required for both the initiation and the maintenance of neoplastic transformation, is a protein kinase that catalyzes the phosphorylation of tyrosine residues in vitro. This Gallus gallus (Chicken) protein is Tyrosine-protein kinase transforming protein Src (V-SRC).